A 377-amino-acid chain; its full sequence is MQTSLDRTSTRSGIRLLLFAQGRANIEELAEQLRRHIQGLPGQHPAHLKVVPLEEHPYLAEHYKLVVTPALVKAEPLPAQVLAGEDLATQLEVWWPRWQGQAALVSYQEEAGQDPAPPPTTEALLQMSEEVFSLRQERAQLREQLDFKDRVLAMLVHDLRSPLTATALAVETLQQGREGSLDKAVERQLFEHARQQLRKMDSMITDILESARGSASELRIRAVETQLASLCQPVIEELLPRIQAKQLQFQADIPVDLPTVHVDPDKIRQVIFNLLDNAIKYTPAGGSIRLNILHRTSQKVQVTVSDTGPGIPEAEQENIFSDAVRLSRDQQQEGYGIGLSLCRRIVRAHYGQIWVESILGKGSSFHFTLPVYRLCGR.

The Histidine kinase domain occupies methionine 154 to arginine 373. Phosphohistidine; by autocatalysis is present on histidine 157.

Homooligomerizes. Interacts with KaiC. Participates in the KaiABC clock complex, whose core is composed of a KaiC homohexamer, 6 KaiB and up to 6 KaiA dimers. SasA and KaiB(fs) compete to bind to KaiC.

It catalyses the reaction ATP + protein L-histidine = ADP + protein N-phospho-L-histidine.. Functionally, member of the two-component regulatory system SasA/RpaA involved in genome-wide circadian gene expression. One of several clock output pathways. Participates in the Kai clock protein complex, the main circadian regulator in cyanobacteria, via its interaction with KaiC. KaiC enhances the autophosphorylation activity of SasA, which then transfers its phosphate group to RpaA to activate it. In addition to its output function, recruits fold-shifted KaiB (KaiB(fs)) to KaiC to cooperatively form the KaiB(6):KaiC(6) complex (independent of SasA kinase activity). Required for robustness of the circadian rhythm of gene expression and is involved in clock output, also required for adaptation to light/dark cycles. The protein is Adaptive-response sensory kinase SasA of Synechococcus sp. (strain JA-3-3Ab) (Cyanobacteria bacterium Yellowstone A-Prime).